The sequence spans 160 residues: uncharacterized protein (160 aa).

Residues 137–157 traverse the membrane as a helical segment; the sequence is YNILFVVVILLLLFVAWRCYV.

It is found in the host membrane. The protein resides in the virion. This is an uncharacterized protein from Acanthamoeba polyphaga mimivirus (APMV).